We begin with the raw amino-acid sequence, 428 residues long: Serine--tRNA ligase (428 aa).

Residue 236-238 coordinates L-serine; the sequence is TAE. Residue 267–269 coordinates ATP; the sequence is RSE. Glutamate 290 lines the L-serine pocket. Position 354-357 (354-357) interacts with ATP; the sequence is EISS. Residue serine 388 coordinates L-serine.

It belongs to the class-II aminoacyl-tRNA synthetase family. Type-1 seryl-tRNA synthetase subfamily. In terms of assembly, homodimer. The tRNA molecule binds across the dimer.

The protein localises to the cytoplasm. The catalysed reaction is tRNA(Ser) + L-serine + ATP = L-seryl-tRNA(Ser) + AMP + diphosphate + H(+). It carries out the reaction tRNA(Sec) + L-serine + ATP = L-seryl-tRNA(Sec) + AMP + diphosphate + H(+). It participates in aminoacyl-tRNA biosynthesis; selenocysteinyl-tRNA(Sec) biosynthesis; L-seryl-tRNA(Sec) from L-serine and tRNA(Sec): step 1/1. In terms of biological role, catalyzes the attachment of serine to tRNA(Ser). Is also able to aminoacylate tRNA(Sec) with serine, to form the misacylated tRNA L-seryl-tRNA(Sec), which will be further converted into selenocysteinyl-tRNA(Sec). The protein is Serine--tRNA ligase of Psychrobacter sp. (strain PRwf-1).